A 374-amino-acid polypeptide reads, in one-letter code: Probable dual-specificity RNA methyltransferase RlmN (374 aa).

Basic and acidic residues predominate over residues 1 to 17 (MEKNEISEERRTQEKEK). Residues 1–22 (MEKNEISEERRTQEKEKQHGHR) form a disordered region. Glu-119 (proton acceptor) is an active-site residue. The Radical SAM core domain maps to 125 to 360 (SEERITACIS…VTVRKSQGAT (236 aa)). Cysteines 132 and 365 form a disulfide. Residues Cys-139, Cys-143, and Cys-146 each coordinate [4Fe-4S] cluster. S-adenosyl-L-methionine is bound by residues 190-191 (GE), Ser-223, 246-248 (SLH), and Asn-322. Catalysis depends on Cys-365, which acts as the S-methylcysteine intermediate.

The protein belongs to the radical SAM superfamily. RlmN family. Requires [4Fe-4S] cluster as cofactor.

The protein localises to the cytoplasm. It carries out the reaction adenosine(2503) in 23S rRNA + 2 reduced [2Fe-2S]-[ferredoxin] + 2 S-adenosyl-L-methionine = 2-methyladenosine(2503) in 23S rRNA + 5'-deoxyadenosine + L-methionine + 2 oxidized [2Fe-2S]-[ferredoxin] + S-adenosyl-L-homocysteine. It catalyses the reaction adenosine(37) in tRNA + 2 reduced [2Fe-2S]-[ferredoxin] + 2 S-adenosyl-L-methionine = 2-methyladenosine(37) in tRNA + 5'-deoxyadenosine + L-methionine + 2 oxidized [2Fe-2S]-[ferredoxin] + S-adenosyl-L-homocysteine. Functionally, specifically methylates position 2 of adenine 2503 in 23S rRNA and position 2 of adenine 37 in tRNAs. This chain is Probable dual-specificity RNA methyltransferase RlmN, found in Chlorobaculum tepidum (strain ATCC 49652 / DSM 12025 / NBRC 103806 / TLS) (Chlorobium tepidum).